Reading from the N-terminus, the 317-residue chain is Ribosomal protein L11 methyltransferase (317 aa).

Thr158, Gly179, Asp201, and Asn244 together coordinate S-adenosyl-L-methionine.

Belongs to the methyltransferase superfamily. PrmA family.

The protein localises to the cytoplasm. It catalyses the reaction L-lysyl-[protein] + 3 S-adenosyl-L-methionine = N(6),N(6),N(6)-trimethyl-L-lysyl-[protein] + 3 S-adenosyl-L-homocysteine + 3 H(+). Its function is as follows. Methylates ribosomal protein L11. The protein is Ribosomal protein L11 methyltransferase of Streptococcus pyogenes serotype M18 (strain MGAS8232).